The sequence spans 120 residues: Ribosome-binding factor A (120 aa).

It belongs to the RbfA family. As to quaternary structure, monomer. Binds 30S ribosomal subunits, but not 50S ribosomal subunits or 70S ribosomes.

The protein localises to the cytoplasm. Its function is as follows. One of several proteins that assist in the late maturation steps of the functional core of the 30S ribosomal subunit. Associates with free 30S ribosomal subunits (but not with 30S subunits that are part of 70S ribosomes or polysomes). Required for efficient processing of 16S rRNA. May interact with the 5'-terminal helix region of 16S rRNA. This chain is Ribosome-binding factor A, found in Fusobacterium nucleatum subsp. nucleatum (strain ATCC 25586 / DSM 15643 / BCRC 10681 / CIP 101130 / JCM 8532 / KCTC 2640 / LMG 13131 / VPI 4355).